Reading from the N-terminus, the 395-residue chain is 1-deoxy-D-xylulose 5-phosphate reductoisomerase (395 aa).

Residues threonine 10, glycine 11, serine 12, isoleucine 13, arginine 37, glutamine 38, and asparagine 124 each coordinate NADPH. Lysine 125 lines the 1-deoxy-D-xylulose 5-phosphate pocket. NADPH is bound at residue glutamate 126. Aspartate 150 provides a ligand contact to Mn(2+). 1-deoxy-D-xylulose 5-phosphate contacts are provided by serine 151, glutamate 152, serine 179, and histidine 202. Glutamate 152 provides a ligand contact to Mn(2+). Glycine 208 contacts NADPH. Residues serine 215, asparagine 220, lysine 221, and glutamate 224 each contribute to the 1-deoxy-D-xylulose 5-phosphate site. Position 224 (glutamate 224) interacts with Mn(2+).

It belongs to the DXR family. Mg(2+) is required as a cofactor. It depends on Mn(2+) as a cofactor.

It catalyses the reaction 2-C-methyl-D-erythritol 4-phosphate + NADP(+) = 1-deoxy-D-xylulose 5-phosphate + NADPH + H(+). It participates in isoprenoid biosynthesis; isopentenyl diphosphate biosynthesis via DXP pathway; isopentenyl diphosphate from 1-deoxy-D-xylulose 5-phosphate: step 1/6. Catalyzes the NADPH-dependent rearrangement and reduction of 1-deoxy-D-xylulose-5-phosphate (DXP) to 2-C-methyl-D-erythritol 4-phosphate (MEP). The protein is 1-deoxy-D-xylulose 5-phosphate reductoisomerase of Cupriavidus pinatubonensis (strain JMP 134 / LMG 1197) (Cupriavidus necator (strain JMP 134)).